Here is a 100-residue protein sequence, read N- to C-terminus: Enhancer of rudimentary homolog (100 aa).

It belongs to the E(R) family. In terms of assembly, homodimer.

In terms of biological role, may have a role in the cell cycle. The protein is Enhancer of rudimentary homolog (erh) of Dictyostelium discoideum (Social amoeba).